We begin with the raw amino-acid sequence, 210 residues long: Ribosomal RNA large subunit methyltransferase E (210 aa).

S-adenosyl-L-methionine is bound by residues glycine 60, tryptophan 62, aspartate 85, aspartate 101, and aspartate 126. Catalysis depends on lysine 166, which acts as the Proton acceptor. Over residues 191 to 200 the composition is skewed to basic and acidic residues; that stretch reads KPKASRDKSS. Residues 191-210 form a disordered region; sequence KPKASRDKSSETFLVARDLK.

The protein belongs to the class I-like SAM-binding methyltransferase superfamily. RNA methyltransferase RlmE family.

It localises to the cytoplasm. The enzyme catalyses uridine(2552) in 23S rRNA + S-adenosyl-L-methionine = 2'-O-methyluridine(2552) in 23S rRNA + S-adenosyl-L-homocysteine + H(+). Its function is as follows. Specifically methylates the uridine in position 2552 of 23S rRNA at the 2'-O position of the ribose in the fully assembled 50S ribosomal subunit. This is Ribosomal RNA large subunit methyltransferase E from Bordetella bronchiseptica (strain ATCC BAA-588 / NCTC 13252 / RB50) (Alcaligenes bronchisepticus).